Reading from the N-terminus, the 257-residue chain is Transmembrane protein 101 (257 aa).

Transmembrane regions (helical) follow at residues 21 to 40 (VLLT…LYAE), 52 to 72 (VPYL…MSFG), 77 to 97 (WFAL…YIGG), 110 to 130 (YSRT…AGEL), 139 to 159 (SLQS…AYSL), 182 to 202 (LFFV…YVTL), 206 to 226 (ILAV…AYWH), and 233 to 253 (FWNQ…AVIL).

It localises to the membrane. May activate NF-kappa-B signaling pathways. This is Transmembrane protein 101 (TMEM101) from Homo sapiens (Human).